A 202-amino-acid polypeptide reads, in one-letter code: Sperm-specific H1/protamine-like protein type 1 (202 aa).

The span at 1–35 (MPSPSRKSRSRSRSRSKSPKRSPAKKARKTPKKPR) shows a compositional bias: basic residues. Disordered stretches follow at residues 1 to 46 (MPSP…PTTL) and 104 to 202 (KTSA…QFAL). Positions 41–120 (KKPTTLSMIV…GATGSFRVGK (80 aa)) constitute an H15 domain. The span at 126–156 (KKAKKAKSPKKKSSKKSKNKSNNAKAKKSPK) shows a compositional bias: basic residues. Residues 177 to 187 (GARYPFRYQAY) are compositionally biased toward low complexity.

OE1 and OE3 are produced by post-translational cleavage of a common precursor. In terms of tissue distribution, sperm.

It is found in the nucleus. Its subcellular location is the chromosome. Its function is as follows. Linker histones are implicated in chromatin remodeling and/or transcriptional regulation during spermiogenesis, the process of spermatid maturation into spermatozoa. Protamines substitute for histones in the chromatin of sperm during the haploid phase of spermatogenesis. They compact sperm DNA into a highly condensed, stable and inactive complex. This chain is Sperm-specific H1/protamine-like protein type 1, found in Ostrea edulis (Native oyster).